Reading from the N-terminus, the 829-residue chain is Periplasmic nitrate reductase (829 aa).

The tat-type signal signal peptide spans Met-1 to Ala-30. The 57-residue stretch at Ile-41–Asp-97 folds into the 4Fe-4S Mo/W bis-MGD-type domain. Cys-48, Cys-51, Cys-55, and Cys-83 together coordinate [4Fe-4S] cluster. Mo-bis(molybdopterin guanine dinucleotide) contacts are provided by residues Lys-85, Gln-152, Asn-177, Cys-181, Trp-214 to Met-221, Ser-245 to His-249, Gln-264 to Asp-266, Met-374, Gln-378, Asn-484, Ser-510 to Asp-511, Lys-533, Asp-560, and Thr-718 to Thr-727. Phe-794 lines the substrate pocket. 2 residues coordinate Mo-bis(molybdopterin guanine dinucleotide): Asn-802 and Lys-819.

Belongs to the prokaryotic molybdopterin-containing oxidoreductase family. NasA/NapA/NarB subfamily. Component of the periplasmic nitrate reductase NapAB complex composed of NapA and NapB. Requires [4Fe-4S] cluster as cofactor. The cofactor is Mo-bis(molybdopterin guanine dinucleotide). In terms of processing, predicted to be exported by the Tat system. The position of the signal peptide cleavage has not been experimentally proven.

Its subcellular location is the periplasm. It catalyses the reaction 2 Fe(II)-[cytochrome] + nitrate + 2 H(+) = 2 Fe(III)-[cytochrome] + nitrite + H2O. Functionally, catalytic subunit of the periplasmic nitrate reductase complex NapAB. Receives electrons from NapB and catalyzes the reduction of nitrate to nitrite. This chain is Periplasmic nitrate reductase, found in Vibrio vulnificus (strain CMCP6).